The following is a 287-amino-acid chain: PIH1 domain-containing protein 1 (287 aa).

This sequence belongs to the PIH1 family.

The protein localises to the nucleus. Functionally, involved in the assembly of C/D box small nucleolar ribonucleoprotein (snoRNP) particles. Recruits the SWI/SNF complex to the core promoter of rRNA genes and enhances pre-rRNA transcription. Mediates interaction of TELO2 with the R2TP complex which is necessary for the stability of MTOR and SMG1. Positively regulates the assembly and activity of the mTORC1 complex. This chain is PIH1 domain-containing protein 1 (pih1d1), found in Danio rerio (Zebrafish).